Here is a 79-residue protein sequence, read N- to C-terminus: Acyl carrier protein (79 aa).

A Carrier domain is found at 2-77 (STIEERVKKI…QAIDYVKSHV (76 aa)). Ser-37 carries the post-translational modification O-(pantetheine 4'-phosphoryl)serine.

It belongs to the acyl carrier protein (ACP) family. In terms of processing, 4'-phosphopantetheine is transferred from CoA to a specific serine of apo-ACP by AcpS. This modification is essential for activity because fatty acids are bound in thioester linkage to the sulfhydryl of the prosthetic group.

The protein resides in the cytoplasm. Its pathway is lipid metabolism; fatty acid biosynthesis. Its function is as follows. Carrier of the growing fatty acid chain in fatty acid biosynthesis. This Xanthomonas oryzae pv. oryzae (strain MAFF 311018) protein is Acyl carrier protein.